Consider the following 943-residue polypeptide: UvrABC system protein A (943 aa).

Residue Gly31–Ser38 coordinates ATP. The C4-type zinc-finger motif lies at Cys253 to Cys280. ABC transporter domains lie at Trp310–Ile587 and Leu607–Lys937. Gly640 to Ser647 contributes to the ATP binding site. The C4-type zinc-finger motif lies at Cys740–Cys766.

It belongs to the ABC transporter superfamily. UvrA family. In terms of assembly, forms a heterotetramer with UvrB during the search for lesions.

It localises to the cytoplasm. In terms of biological role, the UvrABC repair system catalyzes the recognition and processing of DNA lesions. UvrA is an ATPase and a DNA-binding protein. A damage recognition complex composed of 2 UvrA and 2 UvrB subunits scans DNA for abnormalities. When the presence of a lesion has been verified by UvrB, the UvrA molecules dissociate. The chain is UvrABC system protein A from Haemophilus influenzae (strain ATCC 51907 / DSM 11121 / KW20 / Rd).